The primary structure comprises 373 residues: Alginate lyase (373 aa).

Residues 1–25 form the signal peptide; it reads MRLPMQKLLIPTLLGLAMFAGSVNA. Substrate-binding positions include 66 to 67, 139 to 140, and Y257; these read SK and HT.

This sequence belongs to the polysaccharide lyase 5 family.

It localises to the periplasm. It catalyses the reaction Eliminative cleavage of alginate to give oligosaccharides with 4-deoxy-alpha-L-erythro-hex-4-enuronosyl groups at their non-reducing ends and beta-D-mannuronate at their reducing end.. Catalyzes the depolymerization of alginate by cleaving the beta-1,4 glycosidic bond between two adjacent sugar residues via a beta-elimination mechanism. May serve to degrade mislocalized alginate that is trapped in the periplasmic space. In Pseudomonas fluorescens, this protein is Alginate lyase.